A 304-amino-acid polypeptide reads, in one-letter code: Phosphoribosylaminoimidazole-succinocarboxamide synthase (304 aa).

It belongs to the SAICAR synthetase family.

The enzyme catalyses 5-amino-1-(5-phospho-D-ribosyl)imidazole-4-carboxylate + L-aspartate + ATP = (2S)-2-[5-amino-1-(5-phospho-beta-D-ribosyl)imidazole-4-carboxamido]succinate + ADP + phosphate + 2 H(+). It participates in purine metabolism; IMP biosynthesis via de novo pathway; 5-amino-1-(5-phospho-D-ribosyl)imidazole-4-carboxamide from 5-amino-1-(5-phospho-D-ribosyl)imidazole-4-carboxylate: step 1/2. This Streptomyces griseus subsp. griseus (strain JCM 4626 / CBS 651.72 / NBRC 13350 / KCC S-0626 / ISP 5235) protein is Phosphoribosylaminoimidazole-succinocarboxamide synthase.